The chain runs to 88 residues: DASH complex subunit HSK3 (88 aa).

Positions 1 to 15 (MSSRGSGANAASRQS) are enriched in low complexity. The interval 1–24 (MSSRGSGANAASRQSMTASGGAVK) is disordered.

It belongs to the DASH complex HSK3 family. Component of the DASH complex consisting of ASK1, DAD1, DAD2, DAD3, DAD4, DAM1, DUO1, HSK3, SPC19 and SPC34, with a stoichiometry of one copy of each subunit per complex. Multiple DASH complexes oligomerize to form a ring that encircles spindle microtubules and organizes the rod-like NDC80 complexes of the outer kinetochore. DASH complex oligomerization strengthens microtubule attachments. On cytoplasmic microtubules, DASH complexes appear to form patches instead of rings.

The protein resides in the nucleus. The protein localises to the cytoplasm. Its subcellular location is the cytoskeleton. It is found in the spindle. It localises to the chromosome. The protein resides in the centromere. The protein localises to the kinetochore. Component of the DASH complex that connects microtubules with kinetochores and couples microtubule depolymerisation to chromosome movement; it is involved in retrieving kinetochores to the spindle poles before their re-orientation on the spindle in early mitosis and allows microtubule depolymerization to pull chromosomes apart and resist detachment during anaphase. Kinetochores, consisting of a centromere-associated inner segment and a microtubule-contacting outer segment, play a crucial role in chromosome segregation by mediating the physical connection between centromeric DNA and microtubules. Kinetochores also serve as an input point for the spindle assembly checkpoint, which delays anaphase until all chromosomes have bioriented on the mitotic spindle. The polypeptide is DASH complex subunit HSK3 (Chaetomium thermophilum (strain DSM 1495 / CBS 144.50 / IMI 039719) (Thermochaetoides thermophila)).